Here is a 305-residue protein sequence, read N- to C-terminus: MADKLTHLKQLEAESIHIIREVAAEFDNPVMLYSIGKDSAVMLHLARKAFFPGKLPFPVMHVDTQWKFQEMYRFRDKMVAEMGLELITHVNPDGVAQGINPFTHGSAKHTDIMKTEGLKQALDKYGFDAAFGGARRDEEKSRAKERVYSFRDSKHRWDPKNQRPELWNVYNGKVKKGESIRVFPLSNWTELDIWQYIYLEQIPIVPLYFAAEREVIEKNGTLIMIDDDRILEHLSAEEKARIQKKMVRFRTLGCYPLTGAVESTAATLPDIIQEMLLTRTSERQGRVIDHDGAGSMEEKKRQGYF.

The protein belongs to the PAPS reductase family. CysD subfamily. In terms of assembly, heterodimer composed of CysD, the smaller subunit, and CysN.

The catalysed reaction is sulfate + ATP + H(+) = adenosine 5'-phosphosulfate + diphosphate. It functions in the pathway sulfur metabolism; hydrogen sulfide biosynthesis; sulfite from sulfate: step 1/3. Its function is as follows. With CysN forms the ATP sulfurylase (ATPS) that catalyzes the adenylation of sulfate producing adenosine 5'-phosphosulfate (APS) and diphosphate, the first enzymatic step in sulfur assimilation pathway. APS synthesis involves the formation of a high-energy phosphoric-sulfuric acid anhydride bond driven by GTP hydrolysis by CysN coupled to ATP hydrolysis by CysD. This Azotobacter vinelandii (strain DJ / ATCC BAA-1303) protein is Sulfate adenylyltransferase subunit 2.